We begin with the raw amino-acid sequence, 252 residues long: Small ribosomal subunit protein uS3 (252 aa).

The 73-residue stretch at 39-111 (IRKLINNFAK…EVNLNVLEVK (73 aa)) folds into the KH type-2 domain. Residues 222-252 (KPFASQSSNTPNRRPRNFKGGNNNHVNAKKN) are disordered. Residues 241-252 (GGNNNHVNAKKN) show a composition bias toward polar residues.

It belongs to the universal ribosomal protein uS3 family. Part of the 30S ribosomal subunit. Forms a tight complex with proteins S10 and S14.

Binds the lower part of the 30S subunit head. Binds mRNA in the 70S ribosome, positioning it for translation. In Phytoplasma sp. (strain STRAWB2), this protein is Small ribosomal subunit protein uS3.